A 1084-amino-acid chain; its full sequence is Siderophore biosynthesis regulatory protein URBS1 (1084 aa).

Disordered regions lie at residues 1-164 (MALP…QSSS), 245-283 (AEEHAKMQRYSDEHPRAMNPTSRASYEHESRGMPYRDSY), and 300-337 (RPVHHADSSTNSPQYVPGDVYEHEGSGSPPAAHHAGMR). The segment covering 23-51 (QAAAASSSSSSSSSHHPPPRIAARPIAPA) has biased composition (low complexity). Composition is skewed to polar residues over residues 97–106 (SHHNASSTAT) and 128–141 (RSQSPIAAFRNRSQ). A compositionally biased stretch (low complexity) spans 150–164 (PSRSQPNSPLLQSSS). Over residues 245–260 (AEEHAKMQRYSDEHPR) the composition is skewed to basic and acidic residues. The segment at 338–362 (CSNCGVTSTPLWRRAPDGSTICNAC) adopts a GATA-type 1 zinc-finger fold. Disordered stretches follow at residues 372-405 (HRSASNRLSGSDASPPTHEAKLAAAGPSCSREDD) and 442-472 (VSKRESQTSEDPPPARTAERAPPVAEEKMDD). Over residues 373-385 (RSASNRLSGSDAS) the composition is skewed to polar residues. The GATA-type 2 zinc finger occupies 482–506 (CTNCQTTTTPLWRRDEDGNNICNAC). 6 disordered regions span residues 559-595 (IAPAAGRNAGDSTPKSTESRRASKKSSLTSEQAMREA), 643-679 (RAGADTARTSHPDDSRSSKRPRQSYPLAPREAYDERD), 692-803 (THAA…TKLS), 841-940 (EAAG…SRRN), 953-1019 (AAVP…DDHW), and 1040-1084 (ARPV…APRT). Composition is skewed to basic and acidic residues over residues 650–659 (RTSHPDDSRS) and 715–725 (RLGRSELHGES). The segment covering 752 to 781 (PHHHHHHHHHHANHASHAVHHGHHHHHHHP) has biased composition (basic residues). The segment covering 875–888 (RGTRSGHDSIKQEA) has biased composition (basic and acidic residues). Over residues 961–970 (SPPSTVSNPA) the composition is skewed to polar residues. The segment covering 1070 to 1084 (PVASSPSQAVSAPRT) has biased composition (low complexity).

Its subcellular location is the nucleus. In terms of biological role, involved in the regulation of secreted ferrichrome-type siderophores. Acts directly or indirectly to repress the biosynthesis of siderophores. The sequence is that of Siderophore biosynthesis regulatory protein URBS1 (URBS1) from Mycosarcoma maydis (Corn smut fungus).